The sequence spans 127 residues: Aspartate 1-decarboxylase (127 aa).

S25 serves as the catalytic Schiff-base intermediate with substrate; via pyruvic acid. Position 25 is a pyruvic acid (Ser) (S25). T57 serves as a coordination point for substrate. Residue Y58 is the Proton donor of the active site. 73 to 75 (GAA) serves as a coordination point for substrate.

Belongs to the PanD family. In terms of assembly, heterooctamer of four alpha and four beta subunits. Pyruvate serves as cofactor. Is synthesized initially as an inactive proenzyme, which is activated by self-cleavage at a specific serine bond to produce a beta-subunit with a hydroxyl group at its C-terminus and an alpha-subunit with a pyruvoyl group at its N-terminus.

It localises to the cytoplasm. The catalysed reaction is L-aspartate + H(+) = beta-alanine + CO2. It functions in the pathway cofactor biosynthesis; (R)-pantothenate biosynthesis; beta-alanine from L-aspartate: step 1/1. Catalyzes the pyruvoyl-dependent decarboxylation of aspartate to produce beta-alanine. The polypeptide is Aspartate 1-decarboxylase (Clostridium botulinum (strain Loch Maree / Type A3)).